The sequence spans 379 residues: Copper-containing nitrite reductase (379 aa).

A signal peptide (tat-type signal) is located at residues Met1 to Ala32. Plastocyanin-like domains lie at Glu33–Val214 and Tyr215–Gly379. Residues His134, His139, His174, Cys175, His184, Met189, and His345 each contribute to the Cu cation site.

It belongs to the multicopper oxidase family. In terms of assembly, homotrimer. Cu(2+) serves as cofactor. It depends on Cu(+) as a cofactor. FAD is required as a cofactor. Predicted to be exported by the Tat system. The position of the signal peptide cleavage has not been experimentally proven.

The protein localises to the periplasm. The catalysed reaction is nitric oxide + Fe(III)-[cytochrome c] + H2O = Fe(II)-[cytochrome c] + nitrite + 2 H(+). Its pathway is nitrogen metabolism; nitrate reduction (denitrification); dinitrogen from nitrate: step 2/4. The chain is Copper-containing nitrite reductase (nirU) from Neorhizobium galegae (Rhizobium galegae).